The sequence spans 236 residues: MADS-box transcription factor 3 (236 aa).

Residues 1 to 61 (MGRGKIEIKR…GRLYEYANNS (61 aa)) form the MADS-box domain. The 92-residue stretch at 87 to 178 (AQHYQQESSK…RSKVVENERG (92 aa)) folds into the K-box domain.

Expressed in lemmas, paleas and lodicules.

It localises to the nucleus. Functionally, probable transcription factor involved in the development of floral organs. Acts as C-class protein in association with MADS58. Involved in the control of lodicule number (whorl 2), stamen specification (whorl 3) and floral meristem determinacy (whorl 4), but not in the regulation of carpel morphogenesis. Plays a more predominant role in controlling lodicule development and in specifying stamen identity than MADS58. This chain is MADS-box transcription factor 3 (MADS3), found in Oryza sativa subsp. japonica (Rice).